The primary structure comprises 177 residues: Large ribosomal subunit protein uL6 (177 aa).

It belongs to the universal ribosomal protein uL6 family. As to quaternary structure, part of the 50S ribosomal subunit.

Functionally, this protein binds to the 23S rRNA, and is important in its secondary structure. It is located near the subunit interface in the base of the L7/L12 stalk, and near the tRNA binding site of the peptidyltransferase center. This chain is Large ribosomal subunit protein uL6, found in Polaromonas naphthalenivorans (strain CJ2).